Reading from the N-terminus, the 95-residue chain is Microcin E492 immunity protein (95 aa).

A run of 3 helical transmembrane segments spans residues 1 to 21 (MTLLSFGFSPVFFSVMAFCII), 35 to 55 (VIVLILLTFFICFLYPLTKVY), and 67 to 87 (YLFCFISTLIAIAINVVILTI).

Belongs to the MceB microcin immunity protein family.

It is found in the cell inner membrane. Its function is as follows. Protect the producing cell against microcin E492. This chain is Microcin E492 immunity protein, found in Klebsiella pneumoniae.